The primary structure comprises 170 residues: Regulator of ribonuclease activity A (170 aa).

Belongs to the RraA family. Homotrimer. Binds to both RNA-binding sites in the C-terminal region of Rne and to RhlB.

The protein resides in the cytoplasm. Its function is as follows. Globally modulates RNA abundance by binding to RNase E (Rne) and regulating its endonucleolytic activity. Can modulate Rne action in a substrate-dependent manner by altering the composition of the degradosome. Modulates RNA-binding and helicase activities of the degradosome. The polypeptide is Regulator of ribonuclease activity A (Psychromonas ingrahamii (strain DSM 17664 / CCUG 51855 / 37)).